A 227-amino-acid chain; its full sequence is Cytidylate kinase (227 aa).

Residue 12–20 (GPSGAGKGT) participates in ATP binding.

This sequence belongs to the cytidylate kinase family. Type 1 subfamily.

The protein resides in the cytoplasm. It carries out the reaction CMP + ATP = CDP + ADP. The enzyme catalyses dCMP + ATP = dCDP + ADP. This chain is Cytidylate kinase, found in Shigella flexneri.